Reading from the N-terminus, the 267-residue chain is Hydroxynaphthalene reductase-like protein Arp2 (267 aa).

NADP(+) contacts are provided by Ile25, Asn45, Asp71, and Asn98. Residues Ser147 and Ser148 each act as proton donor in the active site. NADP(+) contacts are provided by Tyr162, Lys166, Val195, and Thr197. Tyr162 functions as the Proton acceptor in the catalytic mechanism. The active-site Lowers pKa of active site Tyr is Lys166.

Belongs to the short-chain dehydrogenases/reductases (SDR) family.

Its function is as follows. Hydroxynaphthalene reductase-like protein; part of the Pks2 gene cluster that mediates the formation of infectious structures (appressoria), enabling these fungi to kill insects faster. The product of the Pks2 gene cluster is different from the one of Pks1 and has still not been identified. The polypeptide is Hydroxynaphthalene reductase-like protein Arp2 (Metarhizium brunneum (strain ARSEF 3297)).